The chain runs to 154 residues: 6,7-dimethyl-8-ribityllumazine synthase (154 aa).

Residues Trp-22, 56–58 (AWE), and 80–82 (CVI) contribute to the 5-amino-6-(D-ribitylamino)uracil site. Position 85–86 (85–86 (DT)) interacts with (2S)-2-hydroxy-3-oxobutyl phosphate. The Proton donor role is filled by His-88. Asn-113 serves as a coordination point for 5-amino-6-(D-ribitylamino)uracil. Arg-127 contributes to the (2S)-2-hydroxy-3-oxobutyl phosphate binding site.

It belongs to the DMRL synthase family. As to quaternary structure, forms an icosahedral capsid composed of 60 subunits, arranged as a dodecamer of pentamers.

The enzyme catalyses (2S)-2-hydroxy-3-oxobutyl phosphate + 5-amino-6-(D-ribitylamino)uracil = 6,7-dimethyl-8-(1-D-ribityl)lumazine + phosphate + 2 H2O + H(+). The protein operates within cofactor biosynthesis; riboflavin biosynthesis; riboflavin from 2-hydroxy-3-oxobutyl phosphate and 5-amino-6-(D-ribitylamino)uracil: step 1/2. Its function is as follows. Catalyzes the formation of 6,7-dimethyl-8-ribityllumazine by condensation of 5-amino-6-(D-ribitylamino)uracil with 3,4-dihydroxy-2-butanone 4-phosphate. This is the penultimate step in the biosynthesis of riboflavin. This is 6,7-dimethyl-8-ribityllumazine synthase from Xanthomonas oryzae pv. oryzae (strain MAFF 311018).